The primary structure comprises 753 residues: LON peptidase N-terminal domain and RING finger protein 3 (753 aa).

The interval 17 to 57 is disordered; it reads GSNNLELAEPEEPGTSAAAGQSAAHPEEVTPEGSQALGAQE. The stretch at 72 to 105 is one TPR 1 repeat; that stretch reads CKVLLTQADALASEGHLREALEVYRQLSERQQLV. The segment at 159 to 197 adopts an RING-type 1 zinc-finger fold; the sequence is CKKCHGFLSDPVSLWCGHTFCKLCLERGRAADRRCALCG. TPR repeat units lie at residues 244-277, 279-311, and 313-345; these read ASQL…APND, LLYS…RPMG, and KAHF…DGKN. Residues 351–450 form a disordered region; that stretch reads EAQRENLELP…QGAKPDLSNP (100 aa). Residues 363-382 show a composition bias toward low complexity; that stretch reads SNQEGAAAAEESSSLANSAQ. The span at 386–413 shows a compositional bias: basic and acidic residues; sequence SSKEDRKKDQEGEDRDAASVRTGKCQEK. The RING-type 2 zinc finger occupies 461–499; it reads CSLCMRLFYEPVTTPCGHTFCLKCLERCLDHNAKCPLCK. The Lon N-terminal domain occupies 540–749; that stretch reads MEELSNLNKN…GIRRILAFIS (210 aa).

In Mus musculus (Mouse), this protein is LON peptidase N-terminal domain and RING finger protein 3 (Lonrf3).